Reading from the N-terminus, the 541-residue chain is RING finger protein 37 (541 aa).

The 81-residue stretch at 258-338 (DVPEEFLDPI…DHFLLQHSIP (81 aa)) folds into the U-box domain. At arginine 451 the chain carries Asymmetric dimethylarginine. The RING-type zinc-finger motif lies at 483–528 (CASCKRVFSPYFKKEPVYQLPCGHLLCRPCLGEKQRSLPMTCTACQ).

In terms of assembly, interacts with UBE2L3. Interacts with VCP. Expressed in liver, heart, brain, kidney and testis.

The protein resides in the nucleus. The enzyme catalyses S-ubiquitinyl-[E2 ubiquitin-conjugating enzyme]-L-cysteine + [acceptor protein]-L-lysine = [E2 ubiquitin-conjugating enzyme]-L-cysteine + N(6)-ubiquitinyl-[acceptor protein]-L-lysine.. The protein operates within protein modification; protein ubiquitination. In terms of biological role, may have a ubiquitin-protein ligase activity acting as an E3 ubiquitin-protein ligase or as a ubiquitin-ubiquitin ligase promoting elongation of ubiquitin chains on substrates. This is RING finger protein 37 from Homo sapiens (Human).